Reading from the N-terminus, the 287-residue chain is Prepilin leader peptidase/N-methyltransferase (287 aa).

6 consecutive transmembrane segments (helical) span residues 10-30, 101-121, 125-145, 177-197, 226-246, and 253-273; these read LGFP…NVVI, ISIQ…ASVW, FGWQ…MSGI, KPAL…WWLF, ILPI…IWLF, and ATPI…FFWG.

Belongs to the peptidase A24 family.

The protein resides in the cell inner membrane. It carries out the reaction Typically cleaves a -Gly-|-Phe- bond to release an N-terminal, basic peptide of 5-8 residues from type IV prepilin, and then N-methylates the new N-terminal amino group, the methyl donor being S-adenosyl-L-methionine.. Plays an essential role in type IV pili and type II pseudopili formation by proteolytically removing the leader sequence from substrate proteins and subsequently monomethylating the alpha-amino group of the newly exposed N-terminal phenylalanine. The protein is Prepilin leader peptidase/N-methyltransferase (xpsO) of Xanthomonas campestris pv. campestris (strain ATCC 33913 / DSM 3586 / NCPPB 528 / LMG 568 / P 25).